The primary structure comprises 70 residues: Large ribosomal subunit protein bL31 (70 aa).

4 residues coordinate Zn(2+): Cys-17, Cys-19, Cys-37, and Cys-40.

This sequence belongs to the bacterial ribosomal protein bL31 family. Type A subfamily. In terms of assembly, part of the 50S ribosomal subunit. Requires Zn(2+) as cofactor.

Binds the 23S rRNA. The chain is Large ribosomal subunit protein bL31 from Clostridium acetobutylicum (strain ATCC 824 / DSM 792 / JCM 1419 / IAM 19013 / LMG 5710 / NBRC 13948 / NRRL B-527 / VKM B-1787 / 2291 / W).